The sequence spans 365 residues: Forkhead box protein E4 (365 aa).

A compositionally biased stretch (basic and acidic residues) spans 1-13 (MDSPDSVRVKCES). The interval 1 to 46 (MDSPDSVRVKCESKGSCSPEEGLNNGLPEEHNQASGGRRRKRPVQR) is disordered. The segment at residues 48 to 142 (KPPYSYIALI…DNGSFLRRRK (95 aa)) is a DNA-binding region (fork-head).

First expressed at the end of gastrulation (stage 13) in the anterior ectodermal placode. During intermediate neural plate stages (stages 14-16), expression expands to the presumptive nasal ectoderm (PNE) and the presumptive lens ectoderm (PLE). By stages 18-21, expression begins to deplete in the PNE, while intensifying in the PLE so that by late neural stages (stages 22), expression is restricted to the PLE. Throughout tailbud stages (stage 23-31), expression is maintained in the lens placode and lens vesicle. In the maturing lens (stage 32-onwards), expression is restricted to the anterior lens epithelium, where it remains during the tadpole stage. In tadpoles there is additional expression in the ventral midline of the pharynx. Expression continues in the adult eye.

The protein resides in the nucleus. Probable transcription factor. Mediates lens formation in the embryo by promoting the proliferation of the specified lens ectoderm and suppressing its terminal differentiation. The protein is Forkhead box protein E4 of Xenopus laevis (African clawed frog).